Here is a 533-residue protein sequence, read N- to C-terminus: Hydroxylamine reductase (533 aa).

Residues cysteine 3, cysteine 6, cysteine 15, and cysteine 21 each contribute to the [4Fe-4S] cluster site. Hybrid [4Fe-2O-2S] cluster is bound by residues histidine 234, glutamate 258, cysteine 302, cysteine 389, cysteine 417, cysteine 442, glutamate 476, and lysine 478. Cysteine 389 is subject to Cysteine persulfide.

This sequence belongs to the HCP family. [4Fe-4S] cluster serves as cofactor. The cofactor is hybrid [4Fe-2O-2S] cluster.

It is found in the cytoplasm. It catalyses the reaction A + NH4(+) + H2O = hydroxylamine + AH2 + H(+). In terms of biological role, catalyzes the reduction of hydroxylamine to form NH(3) and H(2)O. This chain is Hydroxylamine reductase, found in Maridesulfovibrio salexigens (strain ATCC 14822 / DSM 2638 / NCIMB 8403 / VKM B-1763) (Desulfovibrio salexigens).